The primary structure comprises 376 residues: Heat stress transcription factor A-2a (376 aa).

Residues Leu-137–Ala-168 are disordered. Residues Pro-151–Ser-160 are compositionally biased toward low complexity. Residues Val-182–Val-229 adopt a coiled-coil conformation. A hydrophobic repeat HR-A/B region spans residues Leu-185–Met-235. The Nuclear localization signal motif lies at Lys-265–Arg-269. Disordered stretches follow at residues Val-296 to Ser-319 and Lys-332 to Asp-362. The span at Gly-307–Asp-316 shows a compositional bias: gly residues. Positions Glu-318–Leu-325 match the AHA motif. Residues Val-352–Asp-362 are compositionally biased toward acidic residues. The Nuclear export signal signature appears at Leu-366–Leu-373.

The protein belongs to the HSF family. Class A subfamily. As to quaternary structure, homotrimer. Exhibits temperature-dependent phosphorylation.

The protein resides in the cytoplasm. The protein localises to the nucleus. In terms of biological role, transcriptional regulator that specifically binds DNA of heat shock promoter elements (HSE). In Oryza sativa subsp. japonica (Rice), this protein is Heat stress transcription factor A-2a (HSFA2A).